A 407-amino-acid chain; its full sequence is MTSGEQAKTPLQAPILLTNVKPVGFGKGASQSSTDILIGGDGKIAAVGSALQAPADTQRIDAKGAFISPGWVDLHVHIWHGGTDISIRPSECGAERGVTTLVDAGSAGEANFHGFREYIIEPSRERIKAFLNLGSIGLVACNRVPELRDIKDIDLDRILECYAENSEHIVGLKVRASHVITGSWGVTPVKLGKKIAKILKVPMMVHVGEPPALYDEVLEILGPGDVVTHCFNGKSGSSIMEDEDLFNLAERCAGEGIRLDIGHGGASFSFKVAEAAIARGLLPFSISTDLHGHSMNFPVWDLATTMSKLLSVDMPFENVVEAVTRNPASVIRLDMENRLDVGQRADFTVFDLVDADLEATDSNGDVSRLKRLFEPRYAVIGAEAIAASRYIPRARKLVRHSHGYSWR.

His75, His77, Lys173, His206, His229, and Asp289 together coordinate Zn(2+). Position 173 is an N6-carboxylysine (Lys173).

It belongs to the metallo-dependent hydrolases superfamily. Atu3266/EF_0837 deacetylase family. As to quaternary structure, homohexamer, dimer of trimers. Zn(2+) serves as cofactor.

In terms of biological role, esterase that catalyzes the deacetylation of acetyl-(R)-mandelate (in vitro). Can also hydrolyze acetyl glycolate, but with lower efficiency. Has very low N-acetyl-D-amino acid deacetylase activity with N-acetyl-D-serine and N-acetyl-D-threonine (in vitro). Theoretical substrate docking studies suggest that other N-acetylated amino acids may optimally occupy the active site and may in fact be the physiological substrates. The sequence is that of Deacetylase Atu3266 from Agrobacterium fabrum (strain C58 / ATCC 33970) (Agrobacterium tumefaciens (strain C58)).